Reading from the N-terminus, the 122-residue chain is Small ribosomal subunit protein uS13 (122 aa).

Residues 99–122 (RGQRTHTNARTRKGPAKAIAGKKK) form a disordered region.

It belongs to the universal ribosomal protein uS13 family. In terms of assembly, part of the 30S ribosomal subunit. Forms a loose heterodimer with protein S19. Forms two bridges to the 50S subunit in the 70S ribosome.

Its function is as follows. Located at the top of the head of the 30S subunit, it contacts several helices of the 16S rRNA. In the 70S ribosome it contacts the 23S rRNA (bridge B1a) and protein L5 of the 50S subunit (bridge B1b), connecting the 2 subunits; these bridges are implicated in subunit movement. Contacts the tRNAs in the A and P-sites. In Rhodopseudomonas palustris (strain BisA53), this protein is Small ribosomal subunit protein uS13.